Consider the following 387-residue polypeptide: Trichocyst matrix protein T2-C (387 aa).

Positions 1–19 are cleaved as a signal peptide; it reads MKTIILALALIVLASSTQA. A propeptide spanning residues 20-48 is cleaved from the precursor; the sequence is DVIATIKKIDQSPFGRTLFDTIWLELQTG. The stretch at 51-163 forms a coiled coil; the sequence is LDRLLQTLTD…KVLEHQEATA (113 aa). Residues 184–239 constitute a propeptide that is removed on maturation; sequence KGKATKQPAHKFTKEVASMIQKHFTTSAKKAAKFQHRKGYSKLFKAFATIASKVEQ. Residues 294 to 333 adopt a coiled-coil conformation; the sequence is TALANAQSDLAALNDVIAQVEASLDTTNQRIENVSADRND.

Belongs to the TMP family. In terms of processing, two components are produced by post-translational processing from the precursor peptide.

The protein resides in the trichocyst. Its function is as follows. Structural protein that crystallize inside the trichocyst matrix. This is Trichocyst matrix protein T2-C (T2C) from Paramecium tetraurelia.